A 654-amino-acid chain; its full sequence is DNA ligase (654 aa).

NAD(+) contacts are provided by residues 32-36 (DAVYD) and 81-82 (SL). Lys112 serves as the catalytic N6-AMP-lysine intermediate. NAD(+)-binding residues include Arg133, Glu167, and Lys306. Zn(2+) contacts are provided by Cys400, Cys403, Cys416, and Cys421. In terms of domain architecture, BRCT spans 577–654 (ESSSIFSHKT…EEELLKYLKE (78 aa)).

The protein belongs to the NAD-dependent DNA ligase family. LigA subfamily. The cofactor is Mg(2+). Requires Mn(2+) as cofactor.

The enzyme catalyses NAD(+) + (deoxyribonucleotide)n-3'-hydroxyl + 5'-phospho-(deoxyribonucleotide)m = (deoxyribonucleotide)n+m + AMP + beta-nicotinamide D-nucleotide.. DNA ligase that catalyzes the formation of phosphodiester linkages between 5'-phosphoryl and 3'-hydroxyl groups in double-stranded DNA using NAD as a coenzyme and as the energy source for the reaction. It is essential for DNA replication and repair of damaged DNA. In Helicobacter acinonychis (strain Sheeba), this protein is DNA ligase.